The following is a 571-amino-acid chain: Streptolysin O (571 aa).

A signal peptide spans 1–33 (MSNKKTFKKYSRVAGLLTAALIIGNLVTANAES). The segment at 30–108 (NAESNKQNTA…KKSEEDHTEE (79 aa)) is disordered. The segment covering 37 to 48 (NTASTETTTTNE) has biased composition (low complexity). 2 stretches are compositionally biased toward basic and acidic residues: residues 50–68 (PKPE…KTDD) and 79–108 (APKE…HTEE). The next 4 beta stranded transmembrane spans lie at 260–273 (KSQI…NSKI), 280–289 (IDFKSISKGE), 358–367 (SNDVEAAFSA), and 375–387 (KTNG…LENS). Positions 529–539 (ECTGLAWEWWR) match the Conserved undecapeptide motif. The short motif at 561-562 (TL) is the Cholesterol binding element.

This sequence belongs to the cholesterol-dependent cytolysin family. Homooligomeric pore complex of 35 to 50 subunits; when inserted in the host membrane.

The protein resides in the secreted. It is found in the host cell membrane. In terms of biological role, a cholesterol-dependent toxin that causes cytolysis by forming pores in cholesterol containing host membranes. After binding to target membranes, the protein undergoes a major conformation change, leading to its insertion in the host membrane and formation of an oligomeric pore complex. Cholesterol is required for binding to host membranes, membrane insertion and pore formation; cholesterol binding is mediated by a Thr-Leu pair in the C-terminus. Can be reversibly inactivated by oxidation. This chain is Streptolysin O (slo), found in Streptococcus pyogenes serotype M3 (strain ATCC BAA-595 / MGAS315).